We begin with the raw amino-acid sequence, 155 residues long: SsrA-binding protein (155 aa).

Belongs to the SmpB family.

The protein resides in the cytoplasm. Functionally, required for rescue of stalled ribosomes mediated by trans-translation. Binds to transfer-messenger RNA (tmRNA), required for stable association of tmRNA with ribosomes. tmRNA and SmpB together mimic tRNA shape, replacing the anticodon stem-loop with SmpB. tmRNA is encoded by the ssrA gene; the 2 termini fold to resemble tRNA(Ala) and it encodes a 'tag peptide', a short internal open reading frame. During trans-translation Ala-aminoacylated tmRNA acts like a tRNA, entering the A-site of stalled ribosomes, displacing the stalled mRNA. The ribosome then switches to translate the ORF on the tmRNA; the nascent peptide is terminated with the 'tag peptide' encoded by the tmRNA and targeted for degradation. The ribosome is freed to recommence translation, which seems to be the essential function of trans-translation. This is SsrA-binding protein from Streptococcus agalactiae serotype Ia (strain ATCC 27591 / A909 / CDC SS700).